Here is a 163-residue protein sequence, read N- to C-terminus: Neurotrophin-3 (163 aa).

A signal peptide spans 1–3 (IQS). Residues 4-119 (SSMDQGILTE…VLNRTSRRKR (116 aa)) constitute a propeptide that is removed on maturation. The disordered stretch occupies residues 36 to 61 (QTARTKDGMQTTVKKTEAEADARASQ). A compositionally biased stretch (basic and acidic residues) spans 49-61 (KKTEAEADARASQ). An N-linked (GlcNAc...) asparagine glycan is attached at N112.

This sequence belongs to the NGF-beta family.

Its subcellular location is the secreted. In terms of biological role, seems to promote the survival of visceral and proprioceptive sensory neurons. The sequence is that of Neurotrophin-3 (NTF3) from Boa constrictor (Boa).